Consider the following 461-residue polypeptide: Elongation factor 1-alpha, oocyte form (461 aa).

Glycine 2 carries the post-translational modification N,N,N-trimethylglycine. In terms of domain architecture, tr-type G spans lysine 5–threonine 242. Residues glycine 14–serine 21 are G1. Glycine 14–serine 21 contributes to the GTP binding site. The G2 stretch occupies residues glycine 70 to aspartate 74. The interval aspartate 91 to glycine 94 is G3. Residues aspartate 91–histidine 95 and asparagine 153–aspartate 156 contribute to the GTP site. The G4 stretch occupies residues asparagine 153 to aspartate 156. The interval serine 194–tryptophan 196 is G5. 2 positions are modified to 5-glutamyl glycerylphosphorylethanolamine: glutamate 301 and glutamate 374.

This sequence belongs to the TRAFAC class translation factor GTPase superfamily. Classic translation factor GTPase family. EF-Tu/EF-1A subfamily. Oocyte.

The protein resides in the cytoplasm. In terms of biological role, this protein promotes the GTP-dependent binding of aminoacyl-tRNA to the A-site of ribosomes during protein biosynthesis. The sequence is that of Elongation factor 1-alpha, oocyte form (eef1ao) from Xenopus laevis (African clawed frog).